We begin with the raw amino-acid sequence, 387 residues long: Alpha-maltose-1-phosphate synthase (387 aa).

It belongs to the glycosyltransferase group 1 family.

The catalysed reaction is ADP-alpha-D-glucose + alpha-D-glucose 1-phosphate = alpha-maltose 1-phosphate + ADP + H(+). It participates in glycan biosynthesis; glycogen biosynthesis. Involved in the biosynthesis of the maltose-1-phosphate (M1P) building block required for alpha-glucan production by the key enzyme GlgE. Catalyzes the formation of an alpha-1,4 linkage between glucose from ADP-glucose and glucose 1-phosphate (G1P) to yield maltose-1-phosphate (M1P). This is Alpha-maltose-1-phosphate synthase from Mycolicibacterium smegmatis (strain ATCC 700084 / mc(2)155) (Mycobacterium smegmatis).